A 248-amino-acid polypeptide reads, in one-letter code: Transmembrane protein 182 (248 aa).

An N-terminal signal peptide occupies residues 1-26 (MKIHVAGFFAGLFGALATLFILLSFG). Residues 27-136 (TDYWLLASET…IIYRGFWSVS (110 aa)) lie on the Extracellular side of the membrane. 2 N-linked (GlcNAc...) asparagine glycosylation sites follow: N66 and N119. Residues 137 to 157 (MLVGVAAVVAGGFIIICAAPF) form a helical membrane-spanning segment. Residues 158 to 167 (ASHRLYKAGG) lie on the Cytoplasmic side of the membrane. The helical transmembrane segment at 168 to 188 (GLYLISGFFVLVVTAMYVIWI) threads the bilayer. Over 189–218 (DVLDVISLYTEYQKLNKCADFELNKTYGLS) the chain is Extracellular. N-linked (GlcNAc...) asparagine glycosylation is present at N212. The helical transmembrane segment at 219–239 (FMFAPVGVFFCFLSGLLFLVI) threads the bilayer. Topologically, residues 240–248 (GRTVHHQYN) are cytoplasmic.

The protein belongs to the TMEM182 family.

The protein resides in the cell membrane. May negatively regulate myogenesis and skeletal muscle regeneration. The sequence is that of Transmembrane protein 182 (tmem182a) from Danio rerio (Zebrafish).